The primary structure comprises 630 residues: Plastin-1 (630 aa).

A fimbrin headpiece region spans residues 1-114; the sequence is MENNVTTISR…LGGTSSISTE (114 aa). EF-hand domains are found at residues 11 to 46 and 51 to 86; these read EELEELREAFNKIDIDNSGYVSDYELQDLFKEASLP and KVREIIEKIFAVTDSNKDGKINFEEFVSLIQELKSK. 10 residues coordinate Ca(2+): D24, D26, S28, Y30, E35, D64, N66, D68, K70, and E75. Actin-binding stretches follow at residues 108 to 375 and 376 to 624; these read TSSI…LFNT and YPAL…LMGR. The fimbrin core stretch occupies residues 115–630; it reads GTQHSYSEEE…LMGRGLNKIK (516 aa). 4 Calponin-homology (CH) domains span residues 122–238, 266–377, 396–505, and 517–626; these read EEEK…KVGL, LSPE…NTYP, SNEE…RRYT, and KVND…GRGL.

Monomer. Post-translationally, the N-terminus is blocked.

It localises to the cytoplasm. The protein localises to the cell projection. It is found in the stereocilium. Functionally, actin-bundling protein. In the inner ear, it is required for stereocilia formation. Mediates liquid packing of actin filaments that is necessary for stereocilia to grow to their proper dimensions. The sequence is that of Plastin-1 (PLS1) from Gallus gallus (Chicken).